The sequence spans 1052 residues: uncharacterized protein (1052 aa).

The 173-residue stretch at 389-561 folds into the Helicase ATP-binding domain; that stretch reads WINKGKTFAI…NKGGNYIMIN (173 aa). 400–407 serves as a coordination point for ATP; that stretch reads SAMGTGKT.

This sequence belongs to the mimivirus R1 family.

This is an uncharacterized protein from Acanthamoeba polyphaga mimivirus (APMV).